A 208-amino-acid chain; its full sequence is MEAPPVTTMPVSGGTINMMEYLLQGSILDQGLESLLHRLRGLCDNMEPETFADHESVYLLKGQQASPFVLRARRPLDRPGAPWHLRYLGQPEAGDRSRHTLVRNCVDIATSDVLPEFLQEMGFRMDHEFVARGHLFRKGVMKVAVYKVFRVLVSGAAEGAEPLSLSYLVELSAVAPAGQDNIADEVRGFAEQLRPLVQLEKIDPKRVM.

This sequence belongs to the Mediator complex subunit 18 family. In terms of assembly, component of the Mediator complex.

The protein resides in the nucleus. Its function is as follows. Component of the Mediator complex, a coactivator involved in the regulated transcription of nearly all RNA polymerase II-dependent genes. Mediator functions as a bridge to convey information from gene-specific regulatory proteins to the basal RNA polymerase II transcription machinery. Mediator is recruited to promoters by direct interactions with regulatory proteins and serves as a scaffold for the assembly of a functional preinitiation complex with RNA polymerase II and the general transcription factors. The polypeptide is Mediator of RNA polymerase II transcription subunit 18 (med18) (Xenopus laevis (African clawed frog)).